Consider the following 364-residue polypeptide: Nucleoside ABC transporter permease protein NupB (364 aa).

8 consecutive transmembrane segments (helical) span residues 9 to 29 (LVPL…MLAF), 77 to 99 (FNIG…ALSF), 105 to 125 (LLMI…MGFI), 138 to 158 (VITT…MIHS), 195 to 215 (TLNI…IIFT), 244 to 264 (LILS…VYGF), 284 to 304 (MAVA…ALLF), and 326 to 346 (VVTA…VMLP).

The protein belongs to the binding-protein-dependent transport system permease family. As to quaternary structure, the complex is composed of two ATP-binding proteins (NupA), two transmembrane proteins (NupB and NupC) and a solute-binding protein (BmpA).

Its subcellular location is the cell membrane. Its function is as follows. Part of an ABC transporter complex involved in the uptake of all common nucleosides. Responsible for the translocation of the substrate across the membrane. In Lactococcus lactis subsp. cremoris (strain MG1363), this protein is Nucleoside ABC transporter permease protein NupB.